A 378-amino-acid polypeptide reads, in one-letter code: Sphingosine 1-phosphate receptor 3 (378 aa).

The Extracellular portion of the chain corresponds to 1–40 (MATALPPRLQPVRGNETLREHYQYVGKLAGRLKEASEGST). A glycan (N-linked (GlcNAc...) asparagine) is linked at asparagine 15. Residues 41-65 (LTTVLFLVICSFIVLENLMVLIAIW) traverse the membrane as a helical segment. The Cytoplasmic portion of the chain corresponds to 66–72 (KNNKFHN). A helical transmembrane segment spans residues 73 to 101 (RMYFFIGNLALCDLLAGIAYKVNILMSGK). Residues 102–115 (KTFSLSPTVWFLRE) lie on the Extracellular side of the membrane. The helical transmembrane segment at 116–134 (GSMFVALGASTCSLLAIAI) threads the bilayer. Over 135-153 (ERHLTMIKMRPYDANKRHR) the chain is Cytoplasmic. Residues 154–179 (VFLLIGMCWLIAFTLGALPILGWNCL) form a helical membrane-spanning segment. At 180–195 (HNLPDCSTILPLYSKK) the chain is on the extracellular side. Residues 196–216 (YIAFCISIFTAILVTIVILYA) traverse the membrane as a helical segment. Topologically, residues 217-243 (RIYFLVKSSSRKVANHNNSERSMALLR) are cytoplasmic. Residues 244–265 (TVVIVVSVFIACWSPLFILFLI) traverse the membrane as a helical segment. Residues 266-281 (DVACRVQACPILFKAQ) are Extracellular-facing. Residues 282–302 (WFIVLAVLNSAMNPVIYTLAS) traverse the membrane as a helical segment. Topologically, residues 303 to 378 (KEMRRAFFRL…AALQNGIFCN (76 aa)) are cytoplasmic. Serine 326 is modified (phosphoserine). The segment at 327–357 (PIQPALDPSRSKSSSSNNSSHSPKVKEDLPH) is disordered. A compositionally biased stretch (low complexity) spans 337-348 (SKSSSSNNSSHS).

This sequence belongs to the G-protein coupled receptor 1 family. As to expression, expressed in all tissues, but most abundantly in heart, placenta, kidney, and liver.

The protein localises to the cell membrane. Its function is as follows. Receptor for the lysosphingolipid sphingosine 1-phosphate (S1P). S1P is a bioactive lysophospholipid that elicits diverse physiological effect on most types of cells and tissues. When expressed in rat HTC4 hepatoma cells, is capable of mediating S1P-induced cell proliferation and suppression of apoptosis. The sequence is that of Sphingosine 1-phosphate receptor 3 from Homo sapiens (Human).